The following is a 369-amino-acid chain: Maltose/maltodextrin import ATP-binding protein MalK (369 aa).

The 231-residue stretch at 4–234 (VTLSSVYKAF…PANRFVAGFI (231 aa)) folds into the ABC transporter domain. 36 to 43 (GPSGCGKS) provides a ligand contact to ATP.

The protein belongs to the ABC transporter superfamily. Maltooligosaccharide importer (TC 3.A.1.1.1) family. As to quaternary structure, the complex is composed of two ATP-binding proteins (MalK), two transmembrane proteins (MalG and MalK) and a solute-binding protein (MalE).

It localises to the cell inner membrane. It catalyses the reaction D-maltose(out) + ATP + H2O = D-maltose(in) + ADP + phosphate + H(+). Part of the ABC transporter complex MalEFGK involved in maltose/maltodextrin import. Responsible for energy coupling to the transport system. The chain is Maltose/maltodextrin import ATP-binding protein MalK from Yersinia pestis bv. Antiqua (strain Antiqua).